The following is a 505-amino-acid chain: COMPASS component BRE2 (505 aa).

The 226-residue stretch at Ser-70–Phe-295 folds into the B30.2/SPRY domain. Residue Ser-227 is modified to Phosphoserine. The interval Glu-271–Thr-290 is disordered. Lys-318 serves as a coordination point for DNA. A disordered region spans residues Arg-398 to Lys-420. The segment covering Ala-409–Lys-420 has biased composition (basic residues).

It belongs to the cclA family. As to quaternary structure, component of the Set1C/COMPASS complex which consists of SET1(2), BRE2(2), SPP1(2), SDC1(1), SHG1(1), SWD1(1), SWD2(1), and SWD3(1). Interacts directly with SDC1.

The protein resides in the nucleus. The protein localises to the chromosome. Its subcellular location is the telomere. Component of the Set1C/COMPASS complex that specifically mono-, di- and trimethylates histone H3 to form H3K4me1/2/3, which subsequently plays a role in telomere length maintenance and transcription elongation regulation. COMPASS recognizes ubiquitinated H2B on one face of the nucleosome which stimulates the methylation of H3 on the opposing face. This chain is COMPASS component BRE2, found in Saccharomyces cerevisiae (strain ATCC 204508 / S288c) (Baker's yeast).